The following is a 486-amino-acid chain: Cardiolipin synthase A (486 aa).

2 helical membrane-spanning segments follow: residues 3 to 23 (IFYD…IANI) and 38 to 58 (MSWL…WFFF). 2 PLD phosphodiesterase domains span residues 219–246 (LDVR…VDPY) and 399–426 (KKGL…DMRS). Residues H224, K226, D231, H404, K406, and D411 contribute to the active site.

Belongs to the phospholipase D family. Cardiolipin synthase subfamily. ClsA sub-subfamily.

The protein localises to the cell inner membrane. It catalyses the reaction 2 a 1,2-diacyl-sn-glycero-3-phospho-(1'-sn-glycerol) = a cardiolipin + glycerol. Catalyzes the reversible phosphatidyl group transfer from one phosphatidylglycerol molecule to another to form cardiolipin (CL) (diphosphatidylglycerol) and glycerol. The chain is Cardiolipin synthase A from Buchnera aphidicola subsp. Schizaphis graminum (strain Sg).